The primary structure comprises 525 residues: Protein ea59 (525 aa).

The protein is Protein ea59 (ea59) of Escherichia coli (Bacteriophage lambda).